Here is a 516-residue protein sequence, read N- to C-terminus: MEPAVSLAVCALLFLLWVRVKGLEFVLIHQRWVFVCLFLLPLSLIFDIYYYVRAWVVFKLSSAPRLHEQRVQDIQKQVREWKEQGSKTFMCTGRPGWLTVSLRVGKYKKTHKNIMINLMDILEVDTKKQIVRVEPLVSMGQVTALLNSIGWTLPVLPELDDLTVGGLIMGTGIESSSHKYGLFQHICTAYELILADGSFVRCTPSENSDLFYAVPWSCGTLGFLVAAEIRIIPAKKYVKLRFEPVRGLEAICEKFTHESQRLENHFVEGLLYSLDEAVIMTGVMTDDVEPSKLNSIGSYYKPWFFKHVENYLKTNREGLEYIPLRHYYHRHTRSIFWELQDIIPFGNNPIFRYLFGWMVPPKISLLKLTQGETLRKLYEQHHVVQDMLVPMKCLSQALHTFQNDIHVYPIWLCPFILPSQPGLVHPKGDEAELYVDIGAYGEPRVKHFEARSCMRQLEKFVRSVHGFQMLYADCYMNREEFWEMFDGSLYHKLRKQLGCQDAFPEVYDKICKAARH.

The N-terminal stretch at 1 to 22 is a signal peptide; sequence MEPAVSLAVCALLFLLWVRVKG. Residues 23-31 lie on the Lumenal side of the membrane; the sequence is LEFVLIHQR. Residues 32 to 52 form a helical membrane-spanning segment; it reads WVFVCLFLLPLSLIFDIYYYV. The Cytoplasmic segment spans residues 53 to 516; the sequence is RAWVVFKLSS…YDKICKAARH (464 aa). One can recognise an FAD-binding PCMH-type domain in the interval 58–234; it reads FKLSSAPRLH…VAAEIRIIPA (177 aa). 163–175 is an FAD binding site; sequence TVGGLIMGTGIES.

It belongs to the FAD-binding oxidoreductase/transferase type 4 family. As to quaternary structure, interacts with DHCR7; this interaction regulates DHCR7 activity. It depends on FAD as a cofactor.

It is found in the endoplasmic reticulum membrane. The protein localises to the golgi apparatus membrane. It carries out the reaction cholesterol + NADP(+) = desmosterol + NADPH + H(+). The enzyme catalyses lanosterol + NADPH + H(+) = 24,25-dihydrolanosterol + NADP(+). It catalyses the reaction 5alpha-cholest-8-en-3beta-ol + NADP(+) = zymosterol + NADPH + H(+). It functions in the pathway steroid biosynthesis; cholesterol biosynthesis. Catalyzes the reduction of the delta-24 double bond of sterol intermediates during cholesterol biosynthesis. In addition to its cholesterol-synthesizing activity, can protect cells from oxidative stress by reducing caspase 3 activity during apoptosis induced by oxidative stress. Also protects against amyloid-beta peptide-induced apoptosis. This chain is Delta(24)-sterol reductase (Dhcr24), found in Rattus norvegicus (Rat).